The chain runs to 216 residues: Uracil phosphoribosyltransferase (216 aa).

5-phospho-alpha-D-ribose 1-diphosphate contacts are provided by residues arginine 85, arginine 110, and 135–143 (DPMVATGYS). Residues isoleucine 200 and 205-207 (GDA) each bind uracil. Position 206 (aspartate 206) interacts with 5-phospho-alpha-D-ribose 1-diphosphate.

Belongs to the UPRTase family. It depends on Mg(2+) as a cofactor.

The enzyme catalyses UMP + diphosphate = 5-phospho-alpha-D-ribose 1-diphosphate + uracil. The protein operates within pyrimidine metabolism; UMP biosynthesis via salvage pathway; UMP from uracil: step 1/1. Its activity is regulated as follows. Allosterically activated by GTP. Functionally, catalyzes the conversion of uracil and 5-phospho-alpha-D-ribose 1-diphosphate (PRPP) to UMP and diphosphate. This is Uracil phosphoribosyltransferase from Ralstonia pickettii (strain 12J).